Consider the following 881-residue polypeptide: Fanconi anemia core complex-associated protein 100 (881 aa).

Residues 94-119 are disordered; the sequence is GRSRSTSQDDRDSEDGDQPSPVIPVD. A Phosphoserine modification is found at S667.

Belongs to the multisubunit FA complex composed of FANCA, FANCB, FANCC, FANCE, FANCF, FANCG, FANCL/PHF9, FANCM, FAAP24 and FAAP100. Forms a subcomplex with FANCB and FANCL.

It is found in the nucleus. Functionally, plays a role in Fanconi anemia-associated DNA damage response network. Regulates FANCD2 monoubiquitination and the stability of the FA core complex. Induces chromosomal instability as well as hypersensitivity to DNA cross-linking agents, when repressed. The chain is Fanconi anemia core complex-associated protein 100 from Homo sapiens (Human).